The sequence spans 304 residues: Putative dihydroorotate dehydrogenase A (fumarate) (304 aa).

FMN contacts are provided by residues Ser-21 and 45–46; that span reads KS. Residues Lys-45, 69-73, and Asn-129 each bind substrate; that span reads NAVGL. Asn-129 provides a ligand contact to FMN. Cys-132 functions as the Nucleophile in the catalytic mechanism. FMN contacts are provided by Lys-168 and Ile-194. 195 to 196 contributes to the substrate binding site; it reads NT. FMN is bound by residues Gly-220, 246–247, and 268–269; these read GG and GS.

The protein belongs to the dihydroorotate dehydrogenase family. Type 1 subfamily. In terms of assembly, homodimer. It depends on FMN as a cofactor.

It localises to the cytoplasm. The enzyme catalyses (S)-dihydroorotate + fumarate = orotate + succinate. It functions in the pathway pyrimidine metabolism; UMP biosynthesis via de novo pathway. In terms of biological role, catalyzes the conversion of dihydroorotate to orotate with fumarate as the electron acceptor. This Pediococcus pentosaceus (strain ATCC 25745 / CCUG 21536 / LMG 10740 / 183-1w) protein is Putative dihydroorotate dehydrogenase A (fumarate) (pyrD).